We begin with the raw amino-acid sequence, 156 residues long: Small ribosomal subunit protein uS7 (156 aa).

Belongs to the universal ribosomal protein uS7 family. Part of the 30S ribosomal subunit. Contacts proteins S9 and S11.

Functionally, one of the primary rRNA binding proteins, it binds directly to 16S rRNA where it nucleates assembly of the head domain of the 30S subunit. Is located at the subunit interface close to the decoding center, probably blocks exit of the E-site tRNA. The chain is Small ribosomal subunit protein uS7 from Deinococcus geothermalis (strain DSM 11300 / CIP 105573 / AG-3a).